The following is a 351-amino-acid chain: Glycerol-3-phosphate dehydrogenase [NAD(P)+] (351 aa).

NADPH contacts are provided by Ser18, Trp19, Arg38, and Lys122. Residues Lys122, Gly153, and Ser155 each coordinate sn-glycerol 3-phosphate. Ala157 contributes to the NADPH binding site. Residues Lys208, Asp261, Ser271, Arg272, and Asn273 each contribute to the sn-glycerol 3-phosphate site. Catalysis depends on Lys208, which acts as the Proton acceptor. Arg272 is a binding site for NADPH. Glu297 contacts NADPH.

Belongs to the NAD-dependent glycerol-3-phosphate dehydrogenase family.

It is found in the cytoplasm. The catalysed reaction is sn-glycerol 3-phosphate + NAD(+) = dihydroxyacetone phosphate + NADH + H(+). The enzyme catalyses sn-glycerol 3-phosphate + NADP(+) = dihydroxyacetone phosphate + NADPH + H(+). It participates in membrane lipid metabolism; glycerophospholipid metabolism. Catalyzes the reduction of the glycolytic intermediate dihydroxyacetone phosphate (DHAP) to sn-glycerol 3-phosphate (G3P), the key precursor for phospholipid synthesis. This chain is Glycerol-3-phosphate dehydrogenase [NAD(P)+], found in Bordetella parapertussis (strain 12822 / ATCC BAA-587 / NCTC 13253).